The primary structure comprises 340 residues: Deubiquitinase SseL (340 aa).

H223 is an active-site residue. C285 acts as the Nucleophile in catalysis.

The protein belongs to the peptidase C79 family.

It is found in the secreted. It localises to the host cytoplasm. Functionally, effector proteins function to alter host cell physiology and promote bacterial survival in host tissues. This protease targets the host cell ubiquitin pathway by acting as a deubiquitinase in infected host cells. The sequence is that of Deubiquitinase SseL (sseL) from Salmonella paratyphi B (strain ATCC BAA-1250 / SPB7).